The chain runs to 271 residues: NADPH-dependent 7-cyano-7-deazaguanine reductase (271 aa).

81 to 83 (IES) is a binding site for substrate. Residue 83–84 (SK) coordinates NADPH. Cys177 functions as the Thioimide intermediate in the catalytic mechanism. Catalysis depends on Asp184, which acts as the Proton donor. 216-217 (HE) lines the substrate pocket. NADPH is bound at residue 245–246 (RG).

The protein belongs to the GTP cyclohydrolase I family. QueF type 2 subfamily. In terms of assembly, homodimer.

The protein localises to the cytoplasm. The enzyme catalyses 7-aminomethyl-7-carbaguanine + 2 NADP(+) = 7-cyano-7-deazaguanine + 2 NADPH + 3 H(+). It participates in tRNA modification; tRNA-queuosine biosynthesis. Its function is as follows. Catalyzes the NADPH-dependent reduction of 7-cyano-7-deazaguanine (preQ0) to 7-aminomethyl-7-deazaguanine (preQ1). The polypeptide is NADPH-dependent 7-cyano-7-deazaguanine reductase (Xanthomonas oryzae pv. oryzae (strain MAFF 311018)).